The chain runs to 436 residues: UPF0761 membrane protein Bxeno_A3061 (436 aa).

6 helical membrane passes run 42-62 (LVPL…FASF), 96-116 (GLTT…MMTV), 136-156 (ILVY…SLSI), 180-200 (ALAG…YVYL), 210-230 (AVIG…GFGY), and 241-261 (VYGA…CWFI).

It belongs to the UPF0761 family.

It localises to the cell inner membrane. This is UPF0761 membrane protein Bxeno_A3061 from Paraburkholderia xenovorans (strain LB400).